The following is a 370-amino-acid chain: UDP-N-acetylglucosamine--N-acetylmuramyl-(pentapeptide) pyrophosphoryl-undecaprenol N-acetylglucosamine transferase (370 aa).

Residues 10–12 (TGG), Asn-126, Ser-200, Ile-255, and Gln-300 contribute to the UDP-N-acetyl-alpha-D-glucosamine site.

It belongs to the glycosyltransferase 28 family. MurG subfamily.

It localises to the cell membrane. It catalyses the reaction Mur2Ac(oyl-L-Ala-gamma-D-Glu-L-Lys-D-Ala-D-Ala)-di-trans,octa-cis-undecaprenyl diphosphate + UDP-N-acetyl-alpha-D-glucosamine = beta-D-GlcNAc-(1-&gt;4)-Mur2Ac(oyl-L-Ala-gamma-D-Glu-L-Lys-D-Ala-D-Ala)-di-trans,octa-cis-undecaprenyl diphosphate + UDP + H(+). It functions in the pathway cell wall biogenesis; peptidoglycan biosynthesis. Its function is as follows. Cell wall formation. Catalyzes the transfer of a GlcNAc subunit on undecaprenyl-pyrophosphoryl-MurNAc-pentapeptide (lipid intermediate I) to form undecaprenyl-pyrophosphoryl-MurNAc-(pentapeptide)GlcNAc (lipid intermediate II). In Lactobacillus gasseri (strain ATCC 33323 / DSM 20243 / BCRC 14619 / CIP 102991 / JCM 1131 / KCTC 3163 / NCIMB 11718 / NCTC 13722 / AM63), this protein is UDP-N-acetylglucosamine--N-acetylmuramyl-(pentapeptide) pyrophosphoryl-undecaprenol N-acetylglucosamine transferase.